Here is a 365-residue protein sequence, read N- to C-terminus: Coxsackievirus and adenovirus receptor homolog (365 aa).

Positions 1 to 19 (MALLLCFVLLCGVADFTSS) are cleaved as a signal peptide. Ig-like C2-type domains lie at 20-136 (LSIT…FLLT) and 141-228 (PSGT…LRLD). Over 20 to 238 (LSITTPEQRI…VVPPSNRAGT (219 aa)) the chain is Extracellular. Cystine bridges form between cysteine 41/cysteine 120, cysteine 146/cysteine 223, and cysteine 162/cysteine 212. Asparagine 106 carries N-linked (GlcNAc...) asparagine glycosylation. Residues 239–259 (IAGAVIGTLLALVLIGAILFC) form a helical membrane-spanning segment. S-palmitoyl cysteine attachment occurs at residues cysteine 259 and cysteine 260. The Cytoplasmic portion of the chain corresponds to 260 to 365 (CHKKRREEKY…PAQSKDGSIV (106 aa)). Over residues 269 to 282 (YEKEVHHDIREDVP) the composition is skewed to basic and acidic residues. Residues 269 to 315 (YEKEVHHDIREDVPPPKSRTSTARSYIGSNHSSLGSMSPSNMEGYSK) form a disordered region. Positions 286-315 (SRTSTARSYIGSNHSSLGSMSPSNMEGYSK) are enriched in polar residues. Serine 297, serine 304, serine 306, serine 323, serine 332, and serine 363 each carry phosphoserine. The PDZ-binding motif lies at 360-365 (KDGSIV).

As to quaternary structure, monomer. May form homodimer. Interacts with LNX, MAGI1, DLG4, PRKCABP, TJP1 and CTNNB1. Interacts with MPDZ; recruits MPDZ to intercellular contact sites. Interacts with JAML (homodimeric form). N-glycosylated. In terms of processing, palmitoylated on Cys-259 and/or Cys-260; required for proper localization to the plasma membrane. Expressed in heart, brain, spleen, lung, liver, muscle, kidney, testis, spleen and skeletal muscle.

The protein localises to the cell membrane. Its subcellular location is the basolateral cell membrane. It localises to the cell junction. It is found in the tight junction. The protein resides in the adherens junction. Component of the epithelial apical junction complex that may function as a homophilic cell adhesion molecule and is essential for tight junction integrity. Also involved in transepithelial migration of leukocytes through adhesive interactions with JAML a transmembrane protein of the plasma membrane of leukocytes. The interaction between both receptors also mediates the activation of gamma-delta T-cells, a subpopulation of T-cells residing in epithelia and involved in tissue homeostasis and repair. Upon epithelial CXADR-binding, JAML induces downstream cell signaling events in gamma-delta T-cells through PI3-kinase and MAP kinases. It results in proliferation and production of cytokines and growth factors by T-cells that in turn stimulate epithelial tissues repair. The protein is Coxsackievirus and adenovirus receptor homolog (Cxadr) of Rattus norvegicus (Rat).